The following is a 144-amino-acid chain: Large ribosomal subunit protein uL15 (144 aa).

The tract at residues Met-1–Gly-52 is disordered. 2 stretches are compositionally biased toward basic residues: residues Lys-11–Arg-21 and Thr-30–Arg-47.

This sequence belongs to the universal ribosomal protein uL15 family. In terms of assembly, part of the 50S ribosomal subunit.

Its function is as follows. Binds to the 23S rRNA. This is Large ribosomal subunit protein uL15 from Wigglesworthia glossinidia brevipalpis.